The sequence spans 614 residues: Bifunctional 3'-phosphoadenosine 5'-phosphosulfate synthase 2 (614 aa).

The adenylyl-sulfate kinase stretch occupies residues 1–215 (MSGIKKQKTE…VVELLQEQNI (215 aa)). 52–57 (GAGKTT) is an ATP binding site. Adenosine 5'-phosphosulfate-binding positions include 79–82 (DNVR), F91, 96–99 (REEN), 122–123 (IS), K161, and 174–175 (GF). Residues S197, 409 to 412 (QLRN), 511 to 515 (GRDPA), and A553 each bind ATP. The interval 224–614 (IHELFVPENK…TDYYRSLEKN (391 aa)) is sulfate adenylyltransferase.

The protein in the N-terminal section; belongs to the APS kinase family. In the C-terminal section; belongs to the sulfate adenylyltransferase family. Expressed in cartilage and adrenal gland.

It catalyses the reaction sulfate + ATP + H(+) = adenosine 5'-phosphosulfate + diphosphate. The enzyme catalyses adenosine 5'-phosphosulfate + ATP = 3'-phosphoadenylyl sulfate + ADP + H(+). The protein operates within sulfur metabolism; sulfate assimilation. In terms of biological role, bifunctional enzyme with both ATP sulfurylase and APS kinase activity, which mediates two steps in the sulfate activation pathway. The first step is the transfer of a sulfate group to ATP to yield adenosine 5'-phosphosulfate (APS), and the second step is the transfer of a phosphate group from ATP to APS yielding 3'-phosphoadenylylsulfate/PAPS, the activated sulfate donor used by sulfotransferases. In mammals, PAPS is the sole source of sulfate while APS appears to only be an intermediate in the sulfate-activation pathway. Plays indirectly an important role in skeletogenesis during postnatal growth. In Homo sapiens (Human), this protein is Bifunctional 3'-phosphoadenosine 5'-phosphosulfate synthase 2 (PAPSS2).